We begin with the raw amino-acid sequence, 228 residues long: 2,3-bisphosphoglycerate-dependent phosphoglycerate mutase (228 aa).

Residues 8 to 15 (RHGLSEWN), 21 to 22 (TG), arginine 60, 87 to 90 (ERHY), lysine 98, 114 to 115 (RR), and 183 to 184 (GN) each bind substrate. Histidine 9 acts as the Tele-phosphohistidine intermediate in catalysis. Glutamate 87 (proton donor/acceptor) is an active-site residue.

This sequence belongs to the phosphoglycerate mutase family. BPG-dependent PGAM subfamily.

It catalyses the reaction (2R)-2-phosphoglycerate = (2R)-3-phosphoglycerate. Its pathway is carbohydrate degradation; glycolysis; pyruvate from D-glyceraldehyde 3-phosphate: step 3/5. Its function is as follows. Catalyzes the interconversion of 2-phosphoglycerate and 3-phosphoglycerate. The sequence is that of 2,3-bisphosphoglycerate-dependent phosphoglycerate mutase from Enterococcus faecalis (strain ATCC 700802 / V583).